The primary structure comprises 203 residues: Arcadin-2 (203 aa).

Interacts with crenactin.

The protein resides in the cytoplasm. Its subcellular location is the cytoskeleton. In terms of biological role, part of an actin-like archaeal cytoskeleton. Prevents polymerization of crenactin filaments by binding its C-terminus into crenactin's hydrophobic groove. May act by competing with the D-loop of the following crenactin subunit for the hydrophobic groove. The protein is Arcadin-2 of Pyrobaculum calidifontis (strain DSM 21063 / JCM 11548 / VA1).